A 419-amino-acid polypeptide reads, in one-letter code: L-rhamnose isomerase (419 aa).

Mn(2+)-binding residues include His-262, Asp-294, and Asp-296.

The protein belongs to the rhamnose isomerase family. As to quaternary structure, homotetramer. The cofactor is Mn(2+).

It is found in the cytoplasm. The enzyme catalyses L-rhamnopyranose = L-rhamnulose. It participates in carbohydrate degradation; L-rhamnose degradation; glycerone phosphate from L-rhamnose: step 1/3. Catalyzes the interconversion of L-rhamnose and L-rhamnulose. This chain is L-rhamnose isomerase, found in Citrobacter koseri (strain ATCC BAA-895 / CDC 4225-83 / SGSC4696).